Reading from the N-terminus, the 316-residue chain is MTTASNTPLPSGLRKPLDQFYEYLRAEKGLSLHTQRNYKQQLETMAEHLHSMGLKAWPQVDAGWVRQLAGKGMREGMKASSIATRLSSLRSFFDFLILRGILTANPAKGVSAPRKKRPLPKNLDVDEVNQLLEVNEDDPLAIRDRAIMELMYGAGLRLAELVDIDVRDVHLRSGEIRVIGKGNKERKVPFAGMAVEWVGKWLKVRSGLADPSEPALFVSKLGTRISHRSVQKRMAEWGQKQAVASHITPHKLRHSFATHILESSNNLRAVQELLGHENISTTQIYTHLDFQHLADVYDQAHPRARKKSSQHKEEDE.

The Core-binding (CB) domain maps to 11-97 (SGLRKPLDQF…SLRSFFDFLI (87 aa)). The 181-residue stretch at 118–298 (PLPKNLDVDE…DFQHLADVYD (181 aa)) folds into the Tyr recombinase domain. Catalysis depends on residues R157, K181, H250, R253, and H276. Y285 (O-(3'-phospho-DNA)-tyrosine intermediate) is an active-site residue.

The protein belongs to the 'phage' integrase family. XerC subfamily. Forms a cyclic heterotetrameric complex composed of two molecules of XerC and two molecules of XerD.

The protein resides in the cytoplasm. Functionally, site-specific tyrosine recombinase, which acts by catalyzing the cutting and rejoining of the recombining DNA molecules. The XerC-XerD complex is essential to convert dimers of the bacterial chromosome into monomers to permit their segregation at cell division. It also contributes to the segregational stability of plasmids. This is Tyrosine recombinase XerC from Vibrio vulnificus (strain CMCP6).